We begin with the raw amino-acid sequence, 444 residues long: ATPase PAAT (444 aa).

Residues S177, S182, S254, and S302 each carry the phosphoserine modification. Positions 424 to 444 are disordered; it reads PSPGMPLRHYDSRERLSNGER. Residues 431 to 444 are compositionally biased toward basic and acidic residues; the sequence is RHYDSRERLSNGER.

As to quaternary structure, homodimer. Interacts with ABCB7, ABCB8/MITOSUR and ABCB10.

The protein resides in the cytoplasm. Its subcellular location is the mitochondrion. It catalyses the reaction ATP + H2O = ADP + phosphate + H(+). In terms of biological role, ATPase that regulates mitochondrial ABC transporters ABCB7, ABCB8/MITOSUR and ABCB10. Regulates mitochondrial ferric concentration and heme biosynthesis and plays a role in the maintenance of mitochondrial homeostasis and cell survival. This Rattus norvegicus (Rat) protein is ATPase PAAT.